The primary structure comprises 663 residues: MYYPLSSSLMFFILFSLFYHLPCESSKCESLFQCGNITASFPFWGGDRHKHCGHPLLELRCDQNKSTSLFISDQEFFVLHVDQTSYSLTLARPDLLHSFCSLTFTNTTLPPEIFELSPAYKSVTFYHCYPVLPDLSNYTCPVIGPISVSGNPEDHETCFPNFAANVPTSFVTKEKKLNIANLESVLEKGFEVNMNVIMKACQACSYSNESCGFDENFPFEVKCKPHHSPTDTSLSIGAKAGIAVASVSGLAILLLAGLFLCIRRRRKTQDAQYTSKSLPITSYSSRDTSRNPTSTTISSSSNHSLLPSISNLANRSDYCGVQVFSYEELEEATENFSRELGDGGFGTVYYGVLKDGRAVAVKRLYERSLKRVEQFKNEIEILKSLKHPNLVILYGCTSRHSRELLLVYEYISNGTLAEHLHGNRAEARPLCWSTRLNIAIETASALSFLHIKGIIHRDIKTTNILLDDNYQVKVADFGLSRLFPMDQTHISTAPQGTPGYVDPEYYQCYQLNEKSDVYSFGVVLTELISSKEAVDITRHRHDINLANMAVSKIQNNALHELVDSSLGYDNDPEVRRKMMAVAELAFRCLQQERDVRPAMDEIVEILRGIKDDEKKRVLVKSPDVVDIECGGGDDVGLLRNSVPPPISPETDKWTSSSDTAASL.

The N-terminal stretch at 1–25 (MYYPLSSSLMFFILFSLFYHLPCES) is a signal peptide. Over 26 to 241 (SKCESLFQCG…TSLSIGAKAG (216 aa)) the chain is Extracellular. 5 N-linked (GlcNAc...) asparagine glycosylation sites follow: Asn36, Asn64, Asn106, Asn137, and Asn208. Residues 242–262 (IAVASVSGLAILLLAGLFLCI) traverse the membrane as a helical segment. At 263–663 (RRRRKTQDAQ…TSSSDTAASL (401 aa)) the chain is on the cytoplasmic side. The interval 282-304 (SYSSRDTSRNPTSTTISSSSNHS) is disordered. The segment covering 290-304 (RNPTSTTISSSSNHS) has biased composition (low complexity). Residues 334-609 (ENFSRELGDG…DEIVEILRGI (276 aa)) form the Protein kinase domain. Residues 340–348 (LGDGGFGTV) and Lys362 each bind ATP. The active-site Proton acceptor is Asp458. A disordered region spans residues 637 to 663 (LLRNSVPPPISPETDKWTSSSDTAASL). The segment covering 653 to 663 (WTSSSDTAASL) has biased composition (polar residues).

It belongs to the protein kinase superfamily. Ser/Thr protein kinase family.

It localises to the cell membrane. The catalysed reaction is L-seryl-[protein] + ATP = O-phospho-L-seryl-[protein] + ADP + H(+). It catalyses the reaction L-threonyl-[protein] + ATP = O-phospho-L-threonyl-[protein] + ADP + H(+). The chain is LEAF RUST 10 DISEASE-RESISTANCE LOCUS RECEPTOR-LIKE PROTEIN KINASE-like 1.4 from Arabidopsis thaliana (Mouse-ear cress).